We begin with the raw amino-acid sequence, 544 residues long: Chaperonin GroEL (544 aa).

ATP is bound by residues 30 to 33, lysine 51, 87 to 91, glycine 415, 479 to 481, and aspartate 495; these read TLGP, DGTTT, and NAA.

It belongs to the chaperonin (HSP60) family. As to quaternary structure, forms a cylinder of 14 subunits composed of two heptameric rings stacked back-to-back. Interacts with the co-chaperonin GroES.

The protein localises to the cytoplasm. The catalysed reaction is ATP + H2O + a folded polypeptide = ADP + phosphate + an unfolded polypeptide.. In terms of biological role, together with its co-chaperonin GroES, plays an essential role in assisting protein folding. The GroEL-GroES system forms a nano-cage that allows encapsulation of the non-native substrate proteins and provides a physical environment optimized to promote and accelerate protein folding. The polypeptide is Chaperonin GroEL (Acinetobacter baylyi (strain ATCC 33305 / BD413 / ADP1)).